Here is a 260-residue protein sequence, read N- to C-terminus: MQAFKEYWQKQKKDVTDKKQLLEALKLSFAKEQNKTFAFLIKNFQDGISNYYPNDQEDQSEAAKTAFGTQGIAFPQSGLKGIFMSEWLRKQLGEKAKINLDIKSLKVTDSKISPTIKWNKDIGIKRNQDKPYNFRFEIDIEYQGNYKLSWLEAIIAKFSGIPGEWKGKLNLKFIVDGDLSWEIVQKPDYPGSLFQFDDQKQQLLFKLHVWEKITVQEPEFMELIKSQNLHNLELRTESTKPPVVDLASYLHYQLLKLNQQ.

Belongs to the MG032/MG096/MG288 family.

This is an uncharacterized protein from Mycoplasma pneumoniae (strain ATCC 29342 / M129 / Subtype 1) (Mycoplasmoides pneumoniae).